Reading from the N-terminus, the 389-residue chain is Leucine aminopeptidase 1 (389 aa).

An N-terminal signal peptide occupies residues 1-18 (MKSAALLLPLYAAAFAAA). The propeptide occupies 19–89 (AFHHEHAQAV…TLKRRINAAS (71 aa)). N-linked (GlcNAc...) asparagine glycosylation is present at N99. Positions 188, 207, 246, and 273 each coordinate Zn(2+). A disulfide bridge connects residues C322 and C326. Residue H355 coordinates Zn(2+).

It belongs to the peptidase M28 family. M28E subfamily. As to quaternary structure, monomer. Zn(2+) is required as a cofactor.

Its subcellular location is the secreted. In terms of biological role, extracellular aminopeptidase that allows assimilation of proteinaceous substrates. The protein is Leucine aminopeptidase 1 (lap1) of Pyrenophora teres f. teres (strain 0-1) (Barley net blotch fungus).